We begin with the raw amino-acid sequence, 641 residues long: Soluble starch synthase 1, chloroplastic/amyloplastic (641 aa).

A chloroplast-targeting transit peptide spans 1-113 (MATAAGMGIG…DSIDKTIFVA (113 aa)). The interval 62 to 96 (TFLVPTSTPPAPTQSPAPAPTPPPLPDSGVGEIEP) is disordered. Residues 68–87 (STPPAPTQSPAPAPTPPPLP) show a composition bias toward pro residues. Lysine 147 contacts ADP-alpha-D-glucose.

It belongs to the glycosyltransferase 1 family. Bacterial/plant glycogen synthase subfamily.

Its subcellular location is the plastid. The protein resides in the chloroplast. It localises to the amyloplast. The catalysed reaction is [(1-&gt;4)-alpha-D-glucosyl](n) + ADP-alpha-D-glucose = [(1-&gt;4)-alpha-D-glucosyl](n+1) + ADP + H(+). Its pathway is glycan biosynthesis; starch biosynthesis. The polypeptide is Soluble starch synthase 1, chloroplastic/amyloplastic (Oryza sativa subsp. indica (Rice)).